The following is a 64-amino-acid chain: Large ribosomal subunit protein bL35 (64 aa).

This sequence belongs to the bacterial ribosomal protein bL35 family.

The chain is Large ribosomal subunit protein bL35 from Aliivibrio fischeri (strain ATCC 700601 / ES114) (Vibrio fischeri).